The following is a 166-amino-acid chain: Ubiquitin-fold modifier-conjugating enzyme 1 (166 aa).

Residue Cys-116 is the Glycyl thioester intermediate of the active site.

The protein belongs to the ubiquitin-conjugating enzyme family. UFC1 subfamily.

Its function is as follows. E2-like enzyme which forms an intermediate with UFM1 via a thioester linkage. This Monosiga brevicollis (Choanoflagellate) protein is Ubiquitin-fold modifier-conjugating enzyme 1.